The chain runs to 156 residues: Arginine repressor (156 aa).

This sequence belongs to the ArgR family.

Its subcellular location is the cytoplasm. The protein operates within amino-acid biosynthesis; L-arginine biosynthesis [regulation]. Functionally, regulates arginine biosynthesis genes. This chain is Arginine repressor, found in Vibrio campbellii (strain ATCC BAA-1116).